Here is a 1534-residue protein sequence, read N- to C-terminus: Dicer-like protein 1 (1534 aa).

Residues Pro-36–Lys-70 form a disordered region. The span at Glu-51–Ile-60 shows a compositional bias: acidic residues. The region spanning Leu-130–Leu-311 is the Helicase ATP-binding domain. Leu-143 to Thr-150 is a binding site for ATP. The DEAH box motif lies at Asp-256–His-259. A Helicase C-terminal domain is found at Glu-456–Ile-613. The 91-residue stretch at Ala-648–Ala-738 folds into the Dicer dsRNA-binding fold domain. The 129-residue stretch at Lys-888–Ala-1016 folds into the PAZ domain. RNase III domains follow at residues Ser-1054 to Gly-1199 and Ala-1250 to Asp-1402. Mg(2+) contacts are provided by Glu-1291, Asp-1388, and Glu-1391. Residues Thr-1436–Gly-1504 enclose the DRBM domain. Zn(2+)-binding residues include Cys-1448, His-1475, Cys-1516, and Cys-1518.

Belongs to the helicase family. Dicer subfamily. It depends on Mg(2+) as a cofactor. Mn(2+) serves as cofactor.

Dicer-like endonuclease involved in cleaving double-stranded RNA in the RNA interference (RNAi) pathway. Produces 21 to 25 bp dsRNAs (siRNAs) which target the selective destruction of homologous RNAs leading to sequence-specific suppression of gene expression, called post-transcriptional gene silencing (PTGS). Part of a broad host defense response against viral infection and transposons. In Aspergillus clavatus (strain ATCC 1007 / CBS 513.65 / DSM 816 / NCTC 3887 / NRRL 1 / QM 1276 / 107), this protein is Dicer-like protein 1 (dcl1).